Here is a 429-residue protein sequence, read N- to C-terminus: Enolase (429 aa).

Gln163 contacts (2R)-2-phosphoglycerate. Glu205 serves as the catalytic Proton donor. Mg(2+) contacts are provided by Asp242, Glu285, and Asp312. (2R)-2-phosphoglycerate-binding residues include Lys337, Arg366, Ser367, and Lys388. The active-site Proton acceptor is Lys337.

The protein belongs to the enolase family. The cofactor is Mg(2+).

It localises to the cytoplasm. Its subcellular location is the secreted. It is found in the cell surface. It carries out the reaction (2R)-2-phosphoglycerate = phosphoenolpyruvate + H2O. The protein operates within carbohydrate degradation; glycolysis; pyruvate from D-glyceraldehyde 3-phosphate: step 4/5. Functionally, catalyzes the reversible conversion of 2-phosphoglycerate (2-PG) into phosphoenolpyruvate (PEP). It is essential for the degradation of carbohydrates via glycolysis. This is Enolase from Methylorubrum populi (strain ATCC BAA-705 / NCIMB 13946 / BJ001) (Methylobacterium populi).